The following is a 678-amino-acid chain: Penicillin-binding protein activator LpoA (678 aa).

Positions 1 to 26 (MVPSTFSRLKAARCLPVVLAALIFAG) are cleaved as a signal peptide. Cysteine 27 carries the N-palmitoyl cysteine lipid modification. The S-diacylglycerol cysteine moiety is linked to residue cysteine 27. Disordered regions lie at residues 304–338 (AEQPQPQTVDGVASPAQASVSDLTGEQPAAQSVPV) and 495–530 (IALTGSPITPRETTDSGMTTNNPTLQTTPTDDQFTN). The segment covering 513–529 (TTNNPTLQTTPTDDQFT) has biased composition (low complexity).

The protein belongs to the LpoA family. As to quaternary structure, interacts with PBP1a.

It localises to the cell outer membrane. Its function is as follows. Regulator of peptidoglycan synthesis that is essential for the function of penicillin-binding protein 1A (PBP1a). This chain is Penicillin-binding protein activator LpoA, found in Escherichia coli O6:H1 (strain CFT073 / ATCC 700928 / UPEC).